A 240-amino-acid chain; its full sequence is Intestine-specific homeobox (240 aa).

The interval 36-82 is disordered; the sequence is PTERRSLPRPQSICKEDSRQTTIPGSKLERPPQDQPQEEKKNKRRVR. A compositionally biased stretch (basic and acidic residues) spans 62 to 76; that stretch reads KLERPPQDQPQEEKK. The homeobox DNA-binding region spans 78 to 137; sequence KRRVRTTFTTEQLQELEKLFHFTHYPDIHVRSQLASRINLPEARVQIWFQNQRAKWRKQE.

In terms of tissue distribution, expressed in intestinal epithelial cells from the duodenum to the proximal colon.

It is found in the nucleus. Its function is as follows. Transcription factor that regulates gene expression in intestine. May participate in vitamin A metabolism most likely by regulating BCO1 expression in the intestine. This Mus musculus (Mouse) protein is Intestine-specific homeobox (Isx).